We begin with the raw amino-acid sequence, 364 residues long: E3 ubiquitin-protein ligase rnf146 (364 aa).

Residues 18-37 (KKVSGEAVPEGSGSPSSPSL) form a disordered region. Positions 22–34 (GEAVPEGSGSPSS) are enriched in low complexity. The RING-type zinc finger occupies 42–80 (CPICLQSCVHPVRLPCRHIFCFLCVKGASWHSKRCALCR). Residues 102–178 (SATGGCGTGS…EHGRRRRMKR (77 aa)) form the WWE domain. A glycoprotein-binding residues include Y118, R121, W125, Y155, Q164, R174, and K186. Disordered regions lie at residues 217–262 (AAAE…PASS) and 279–364 (NEQE…VTKV). 2 stretches are compositionally biased toward acidic residues: residues 281-295 (QEPE…DDSA) and 308-322 (TSDD…DENE).

The protein localises to the cytoplasm. It localises to the cytosol. The protein resides in the nucleus. The catalysed reaction is S-ubiquitinyl-[E2 ubiquitin-conjugating enzyme]-L-cysteine + [acceptor protein]-L-lysine = [E2 ubiquitin-conjugating enzyme]-L-cysteine + N(6)-ubiquitinyl-[acceptor protein]-L-lysine.. The protein operates within protein modification; protein ubiquitination. E3 ubiquitin-protein ligase that specifically binds poly-ADP-ribosylated proteins and mediates their ubiquitination and subsequent degradation. May regulate many important biological processes, such as cell survival and DNA damage response. Acts as an activator of the Wnt signaling pathway by mediating the ubiquitination of poly-ADP-ribosylated proteins. Neuroprotective protein. Protects against cell death induced by DNA damaging agents and rescues cells from G1 arrest. Promotes cell survival after gamma-irradiation. Facilitates DNA repair. This Danio rerio (Zebrafish) protein is E3 ubiquitin-protein ligase rnf146 (rnf146).